Consider the following 603-residue polypeptide: Aspartate--tRNA(Asp/Asn) ligase (603 aa).

The aspartate stretch occupies residues 205 to 208; that stretch reads QLFK. Arg227 contributes to the L-aspartate binding site. ATP is bound by residues 227–229 and Gln236; that span reads RDE. An L-aspartate-binding site is contributed by His463. Glu497 serves as a coordination point for ATP. Position 504 (Arg504) interacts with L-aspartate. Residue 549-552 coordinates ATP; that stretch reads GMDR.

It belongs to the class-II aminoacyl-tRNA synthetase family. Type 1 subfamily. As to quaternary structure, homodimer.

The protein localises to the cytoplasm. The catalysed reaction is tRNA(Asx) + L-aspartate + ATP = L-aspartyl-tRNA(Asx) + AMP + diphosphate. Aspartyl-tRNA synthetase with relaxed tRNA specificity since it is able to aspartylate not only its cognate tRNA(Asp) but also tRNA(Asn). Reaction proceeds in two steps: L-aspartate is first activated by ATP to form Asp-AMP and then transferred to the acceptor end of tRNA(Asp/Asn). This chain is Aspartate--tRNA(Asp/Asn) ligase, found in Anaeromyxobacter sp. (strain K).